Here is a 483-residue protein sequence, read N- to C-terminus: ATP synthase subunit beta (483 aa).

168 to 175 (GGAGVGKT) is an ATP binding site.

The protein belongs to the ATPase alpha/beta chains family. In terms of assembly, F-type ATPases have 2 components, CF(1) - the catalytic core - and CF(0) - the membrane proton channel. CF(1) has five subunits: alpha(3), beta(3), gamma(1), delta(1), epsilon(1). CF(0) has three main subunits: a(1), b(2) and c(9-12). The alpha and beta chains form an alternating ring which encloses part of the gamma chain. CF(1) is attached to CF(0) by a central stalk formed by the gamma and epsilon chains, while a peripheral stalk is formed by the delta and b chains.

Its subcellular location is the cell membrane. It carries out the reaction ATP + H2O + 4 H(+)(in) = ADP + phosphate + 5 H(+)(out). Produces ATP from ADP in the presence of a proton gradient across the membrane. The catalytic sites are hosted primarily by the beta subunits. The protein is ATP synthase subunit beta of Mycobacterium ulcerans (strain Agy99).